Reading from the N-terminus, the 156-residue chain is Probable cyclic pyranopterin monophosphate synthase (156 aa).

Substrate is bound at residue 109-110; the sequence is MD. The active site involves aspartate 124.

It belongs to the MoaC family. Homohexamer; trimer of dimers.

It catalyses the reaction (8S)-3',8-cyclo-7,8-dihydroguanosine 5'-triphosphate = cyclic pyranopterin phosphate + diphosphate. The protein operates within cofactor biosynthesis; molybdopterin biosynthesis. Its function is as follows. Catalyzes the conversion of (8S)-3',8-cyclo-7,8-dihydroguanosine 5'-triphosphate to cyclic pyranopterin monophosphate (cPMP). The chain is Probable cyclic pyranopterin monophosphate synthase from Methanopyrus kandleri (strain AV19 / DSM 6324 / JCM 9639 / NBRC 100938).